Reading from the N-terminus, the 463-residue chain is Chromosomal replication initiator protein DnaA (463 aa).

The domain I, interacts with DnaA modulators stretch occupies residues 1–83 (MSTNQIILTD…LQLFQHYNNT (83 aa)). A domain II region spans residues 83-124 (TIKSIEIITKELPGTTQTVTELPTKTFADIGSSELNSENIFS). The domain III, AAA+ region stretch occupies residues 125–343 (TLDARFTFDN…GALNKVIAHS (219 aa)). Residues glycine 171, glycine 173, lysine 174, and threonine 175 each coordinate ATP. The segment at 344 to 463 (NFTLKEITLE…INLLMKILQN (120 aa)) is domain IV, binds dsDNA.

Belongs to the DnaA family. As to quaternary structure, oligomerizes as a right-handed, spiral filament on DNA at oriC.

It localises to the cytoplasm. Its function is as follows. Plays an essential role in the initiation and regulation of chromosomal replication. ATP-DnaA binds to the origin of replication (oriC) to initiate formation of the DNA replication initiation complex once per cell cycle. Binds the DnaA box (a 9 base pair repeat at the origin) and separates the double-stranded (ds)DNA. Forms a right-handed helical filament on oriC DNA; dsDNA binds to the exterior of the filament while single-stranded (ss)DNA is stabiized in the filament's interior. The ATP-DnaA-oriC complex binds and stabilizes one strand of the AT-rich DNA unwinding element (DUE), permitting loading of DNA polymerase. After initiation quickly degrades to an ADP-DnaA complex that is not apt for DNA replication. Binds acidic phospholipids. In Rickettsia peacockii (strain Rustic), this protein is Chromosomal replication initiator protein DnaA.